The chain runs to 361 residues: Phosphoserine aminotransferase (361 aa).

L-glutamate is bound at residue Arg-43. Residues 77–78, Trp-103, Thr-153, Asp-173, and Gln-196 contribute to the pyridoxal 5'-phosphate site; that span reads AS. Position 197 is an N6-(pyridoxal phosphate)lysine (Lys-197). 238-239 is a pyridoxal 5'-phosphate binding site; it reads NT.

It belongs to the class-V pyridoxal-phosphate-dependent aminotransferase family. SerC subfamily. As to quaternary structure, homodimer. Requires pyridoxal 5'-phosphate as cofactor.

Its subcellular location is the cytoplasm. It catalyses the reaction O-phospho-L-serine + 2-oxoglutarate = 3-phosphooxypyruvate + L-glutamate. The enzyme catalyses 4-(phosphooxy)-L-threonine + 2-oxoglutarate = (R)-3-hydroxy-2-oxo-4-phosphooxybutanoate + L-glutamate. It participates in amino-acid biosynthesis; L-serine biosynthesis; L-serine from 3-phospho-D-glycerate: step 2/3. The protein operates within cofactor biosynthesis; pyridoxine 5'-phosphate biosynthesis; pyridoxine 5'-phosphate from D-erythrose 4-phosphate: step 3/5. Its function is as follows. Catalyzes the reversible conversion of 3-phosphohydroxypyruvate to phosphoserine and of 3-hydroxy-2-oxo-4-phosphonooxybutanoate to phosphohydroxythreonine. This chain is Phosphoserine aminotransferase, found in Pseudomonas aeruginosa (strain LESB58).